The primary structure comprises 226 residues: ATP synthase subunit a (226 aa).

Helical transmembrane passes span 20–40 (LNWF…WLMP), 74–94 (FVSL…PYIF), 100–120 (LTLT…YGWI), 162–182 (LTAN…TGPM), and 187–207 (IILS…SAVA).

This sequence belongs to the ATPase A chain family. F-type ATPases have 2 components, CF(1) - the catalytic core - and CF(0) - the membrane proton channel. CF(1) has five subunits: alpha(3), beta(3), gamma(1), delta(1), epsilon(1). CF(0) has three main subunits: a, b and c.

The protein resides in the mitochondrion inner membrane. Its function is as follows. Mitochondrial membrane ATP synthase (F(1)F(0) ATP synthase or Complex V) produces ATP from ADP in the presence of a proton gradient across the membrane which is generated by electron transport complexes of the respiratory chain. F-type ATPases consist of two structural domains, F(1) - containing the extramembraneous catalytic core and F(0) - containing the membrane proton channel, linked together by a central stalk and a peripheral stalk. During catalysis, ATP synthesis in the catalytic domain of F(1) is coupled via a rotary mechanism of the central stalk subunits to proton translocation. Key component of the proton channel; it may play a direct role in the translocation of protons across the membrane. This is ATP synthase subunit a (mt:ATPase6) from Aedes albopictus (Asian tiger mosquito).